We begin with the raw amino-acid sequence, 984 residues long: Protein translocase subunit SecA (984 aa).

ATP-binding positions include Q96, 114–118 (GEGKT), and D595. 2 stretches are compositionally biased toward basic and acidic residues: residues 930–942 (EHEE…RLLE) and 952–971 (KSDK…EERL). Positions 930 to 984 (EHEEEKKHQRLLEEAELQGVQGKSDKKPRPKTLKERLKEERLRKRKLKAKKKEQE) are disordered. Over residues 972-984 (RKRKLKAKKKEQE) the composition is skewed to basic residues.

The protein belongs to the SecA family. In terms of assembly, monomer and homodimer. Part of the essential Sec protein translocation apparatus which comprises SecA, SecYEG and auxiliary proteins SecDF. Other proteins may also be involved.

The protein localises to the cell inner membrane. Its subcellular location is the cytoplasm. The catalysed reaction is ATP + H2O + cellular proteinSide 1 = ADP + phosphate + cellular proteinSide 2.. Part of the Sec protein translocase complex. Interacts with the SecYEG preprotein conducting channel. Has a central role in coupling the hydrolysis of ATP to the transfer of proteins into and across the cell membrane, serving as an ATP-driven molecular motor driving the stepwise translocation of polypeptide chains across the membrane. The polypeptide is Protein translocase subunit SecA (Aquifex aeolicus (strain VF5)).